A 128-amino-acid chain; its full sequence is RutC family protein BU371 (128 aa).

It belongs to the RutC family.

This is RutC family protein BU371 from Buchnera aphidicola subsp. Acyrthosiphon pisum (strain APS) (Acyrthosiphon pisum symbiotic bacterium).